A 912-amino-acid chain; its full sequence is Phosphoenolpyruvate carboxylase (912 aa).

Residues His138 and Lys575 contribute to the active site.

It belongs to the PEPCase type 1 family. Mg(2+) serves as cofactor.

It carries out the reaction oxaloacetate + phosphate = phosphoenolpyruvate + hydrogencarbonate. Its function is as follows. Forms oxaloacetate, a four-carbon dicarboxylic acid source for the tricarboxylic acid cycle. The chain is Phosphoenolpyruvate carboxylase from Lactobacillus helveticus (strain DPC 4571).